A 516-amino-acid polypeptide reads, in one-letter code: DNA-(apurinic or apyrimidinic site) endonuclease 2 (516 aa).

The Mg(2+) site is built by Asn8 and Glu47. Residue Tyr155 is part of the active site. Asp196, Asn198, Asp302, and His303 together coordinate Mg(2+). The Proton donor/acceptor role is filled by Asp196. His303 acts as the Proton acceptor in catalysis. The segment covering Gln357–Arg366 has biased composition (polar residues). The tract at residues Gln357 to Gln389 is disordered. Over residues Gln367–Gln389 the composition is skewed to basic residues. Lys370 is covalently cross-linked (Glycyl lysine isopeptide (Lys-Gly) (interchain with G-Cter in ubiquitin)). Residues Gln389–Phe396 are required for the interaction and colocalization with PCNA in nuclear foci in presence of oxidative-induced DNA damaging agents. Residues Cys467, His470, Cys493, and Cys507 each coordinate Zn(2+). Residues Cys467 to Ser516 form a GRF-type zinc finger.

Belongs to the DNA repair enzymes AP/ExoA family. Interacts with PCNA. This interaction is increased by misincorporation of uracil in nuclear DNA. Requires Mg(2+) as cofactor. The cofactor is Mn(2+). In terms of processing, ubiquitinated by the CUL9-RBX1 complex. Ubiquitinated by MKRN3 at Lys-370 leading to proteasomal degradation. In terms of tissue distribution, expressed in lymphocytes, thymocytes and splenocytes (at protein level). Highly expressed in the thymus and weakly expressed in the bone marrow, spleen, eye, kidney, lung, brain and uterus.

It is found in the nucleus. It localises to the cytoplasm. The protein localises to the mitochondrion. The enzyme catalyses Exonucleolytic cleavage in the 3'- to 5'-direction to yield nucleoside 5'-phosphates.. 3'-5' exonuclease activity is activated by sodium and manganese. 3'-5' exonuclease and 3'-phosphodiesterase activities are stimulated in presence of PCNA. In terms of biological role, functions as a weak apurinic/apyrimidinic (AP) endodeoxyribonuclease in the DNA base excision repair (BER) pathway of DNA lesions induced by oxidative and alkylating agents. Initiates repair of AP sites in DNA by catalyzing hydrolytic incision of the phosphodiester backbone immediately adjacent to the damage, generating a single-strand break with 5'-deoxyribose phosphate and 3'-hydroxyl ends. Also displays double-stranded DNA 3'-5' exonuclease, 3'-phosphodiesterase activities. Shows robust 3'-5' exonuclease activity on 3'-recessed heteroduplex DNA and is able to remove mismatched nucleotides preferentially. Shows fairly strong 3'-phosphodiesterase activity involved in the removal of 3'-damaged termini formed in DNA by oxidative agents. In the nucleus functions in the PCNA-dependent BER pathway. Plays a role in reversing blocked 3' DNA ends, problematic lesions that preclude DNA synthesis. Required for somatic hypermutation (SHM) and DNA cleavage step of class switch recombination (CSR) of immunoglobulin genes. Required for proper cell cycle progression during proliferation of peripheral lymphocytes. This Mus musculus (Mouse) protein is DNA-(apurinic or apyrimidinic site) endonuclease 2 (Apex2).